The sequence spans 203 residues: Ras-related protein Rab-7L1 (203 aa).

Residues Ser33, Lys34, His35, Tyr36, Lys37, and Thr39 each contribute to the GTP site. The Effector region signature appears at 36–44; the sequence is YKSTVGVDF. Thr71 is subject to Phosphothreonine; by LRRK2. Ser72 is subject to Phosphoserine; by LRRK2. Residues Lys126, Val156, and Lys157 each contribute to the GTP site. S-geranylgeranyl cysteine attachment occurs at residues Cys202 and Cys203.

The protein belongs to the small GTPase superfamily. Rab family. In terms of assembly, interacts with LRRK2 (via the N-terminus); this interaction is direct and stimulates kinase activity. In terms of processing, in case of Salmonella enterica serovar Typhimurium (S.typhimurium) infection, is proteolytically cleaved between Gly-41 and Val-42 by the GtgE viral protease encoded on the Gifsy-2 lysogen bacteriophage, which therefore prevents the recruitment of RAB29 to S.typhimurium-containing vacuoles. In contrast, no proteolytically cleavage is detected in S.typhi-infected cells. As to expression, ubiquitous.

It is found in the cell membrane. Its subcellular location is the cytoplasm. It localises to the perinuclear region. The protein localises to the golgi apparatus. The protein resides in the golgi apparatus membrane. It is found in the trans-Golgi network. Its subcellular location is the vacuole. It localises to the cytoskeleton. Functionally, the small GTPases Rab are key regulators in vesicle trafficking. Essential for maintaining the integrity of the endosome-trans-Golgi network structure. Together with LRRK2, plays a role in the retrograde trafficking pathway for recycling proteins, such as mannose 6 phosphate receptor (M6PR), between lysosomes and the Golgi apparatus in a retromer-dependent manner. Recruits LRRK2 to the Golgi complex and stimulates LRRK2 kinase activity. Stimulates phosphorylation of RAB10 'Thr-73' by LRRK2. Regulates neuronal process morphology in the intact central nervous system (CNS). May play a role in the formation of typhoid toxin transport intermediates during Salmonella enterica serovar Typhi (S.typhi) epithelial cell infection. This is Ras-related protein Rab-7L1 (RAB29) from Homo sapiens (Human).